A 509-amino-acid polypeptide reads, in one-letter code: Ribonuclease Y (509 aa).

Residues 5 to 25 form a helical membrane-spanning segment; that stretch reads IIILLSVFCGIFFICFIICSS. One can recognise a KH domain in the interval 199 to 259; sequence TTNIVKLPSD…IRREIATRTL (61 aa). The HD domain maps to 325 to 418; the sequence is VLAHSIEVAK…VAIADSISAS (94 aa).

This sequence belongs to the RNase Y family.

It localises to the cell membrane. In terms of biological role, endoribonuclease that initiates mRNA decay. The sequence is that of Ribonuclease Y from Mycoplasma capricolum subsp. capricolum (strain California kid / ATCC 27343 / NCTC 10154).